The chain runs to 292 residues: Ubiquinone biosynthesis protein UbiV (292 aa).

The [4Fe-4S] cluster site is built by Cys39, Cys180, Cys193, and Cys197.

The protein belongs to the peptidase U32 family. UbiV subfamily. As to quaternary structure, forms a heterodimer with UbiU. It depends on [4Fe-4S] cluster as a cofactor.

It functions in the pathway cofactor biosynthesis; ubiquinone biosynthesis. Required for O(2)-independent ubiquinone (coenzyme Q) biosynthesis. Together with UbiU, is essential for the C6-hydroxylation reaction in the oxygen-independent ubiquinone biosynthesis pathway. The sequence is that of Ubiquinone biosynthesis protein UbiV from Escherichia coli (strain K12).